The chain runs to 348 residues: Histidinol-phosphate aminotransferase (348 aa).

Lys207 carries the N6-(pyridoxal phosphate)lysine modification.

The protein belongs to the class-II pyridoxal-phosphate-dependent aminotransferase family. Histidinol-phosphate aminotransferase subfamily. As to quaternary structure, homodimer. Pyridoxal 5'-phosphate is required as a cofactor.

It catalyses the reaction L-histidinol phosphate + 2-oxoglutarate = 3-(imidazol-4-yl)-2-oxopropyl phosphate + L-glutamate. It functions in the pathway amino-acid biosynthesis; L-histidine biosynthesis; L-histidine from 5-phospho-alpha-D-ribose 1-diphosphate: step 7/9. The sequence is that of Histidinol-phosphate aminotransferase from Crocosphaera subtropica (strain ATCC 51142 / BH68) (Cyanothece sp. (strain ATCC 51142)).